Reading from the N-terminus, the 317-residue chain is Transaldolase (317 aa).

Lysine 132 functions as the Schiff-base intermediate with substrate in the catalytic mechanism.

This sequence belongs to the transaldolase family. Type 1 subfamily. Homodimer.

It is found in the cytoplasm. It carries out the reaction D-sedoheptulose 7-phosphate + D-glyceraldehyde 3-phosphate = D-erythrose 4-phosphate + beta-D-fructose 6-phosphate. It participates in carbohydrate degradation; pentose phosphate pathway; D-glyceraldehyde 3-phosphate and beta-D-fructose 6-phosphate from D-ribose 5-phosphate and D-xylulose 5-phosphate (non-oxidative stage): step 2/3. Functionally, transaldolase is important for the balance of metabolites in the pentose-phosphate pathway. The protein is Transaldolase of Shewanella frigidimarina (strain NCIMB 400).